A 322-amino-acid chain; its full sequence is Nodulation protein D 1 (322 aa).

Residues 6-63 enclose the HTH lysR-type domain; it reads LDLNLLVALDALMTERKLTAAARSINLSQPAMSAAITRLRTYFRDELFTMNGRELVPT. The H-T-H motif DNA-binding region spans 23–42; sequence LTAAARSINLSQPAMSAAIT.

Belongs to the LysR transcriptional regulatory family.

Its function is as follows. Regulates the expression of the nod abcFE genes which encode other nodulation proteins. NodD is also a negative regulator of its own expression. Binds flavonoids as inducers. This chain is Nodulation protein D 1 (nodD1), found in Sinorhizobium fredii (strain NBRC 101917 / NGR234).